The following is a 170-amino-acid chain: MEDPNPEENMKQQDSPKERSPQSPGGNICHLGAPKCTRCLITFADSKFQERHMKREHPADFVAQKLQGVLFICFTCARSFPSSKALITHQRSHGPAAKPTLPVATTTAQPTFPCPDCGKTFGQAVSLRRHRQMHEVRAPPGTFACTECGQDFAQEAGLHQHYIRHARGEL.

Residues 1–29 (MEDPNPEENMKQQDSPKERSPQSPGGNIC) are disordered. Residues 8-20 (ENMKQQDSPKERS) are compositionally biased toward basic and acidic residues. 4 consecutive C2H2-type zinc fingers follow at residues 34–57 (PKCT…KREH), 71–93 (FICF…QRSH), 112–134 (FPCP…RQMH), and 143–165 (FACT…YIRH).

The protein belongs to the krueppel C2H2-type zinc-finger protein family.

The protein resides in the nucleus. Its function is as follows. May be involved in transcriptional regulation. This Homo sapiens (Human) protein is Zinc finger protein 576 (ZNF576).